Reading from the N-terminus, the 274-residue chain is Large ribosomal subunit protein uL2cz/uL2cy (274 aa).

The tract at residues 225 to 274 is disordered; that stretch reads PVDHPHGGGEGRAPIGRKKPVTPWGYPALGRRSRKRKKYSDNLILRRRTK.

It belongs to the universal ribosomal protein uL2 family. As to quaternary structure, part of the 50S ribosomal subunit.

The protein resides in the plastid. It localises to the chloroplast. In Lotus japonicus (Lotus corniculatus var. japonicus), this protein is Large ribosomal subunit protein uL2cz/uL2cy (rpl2-A).